The sequence spans 202 residues: Probable ATP-dependent Clp protease proteolytic subunit 3 (202 aa).

Ser101 serves as the catalytic Nucleophile. Residue His126 is part of the active site.

It belongs to the peptidase S14 family. As to quaternary structure, fourteen ClpP subunits assemble into 2 heptameric rings which stack back to back to give a disk-like structure with a central cavity, resembling the structure of eukaryotic proteasomes.

The protein localises to the cytoplasm. It catalyses the reaction Hydrolysis of proteins to small peptides in the presence of ATP and magnesium. alpha-casein is the usual test substrate. In the absence of ATP, only oligopeptides shorter than five residues are hydrolyzed (such as succinyl-Leu-Tyr-|-NHMec, and Leu-Tyr-Leu-|-Tyr-Trp, in which cleavage of the -Tyr-|-Leu- and -Tyr-|-Trp bonds also occurs).. Cleaves peptides in various proteins in a process that requires ATP hydrolysis. Has a chymotrypsin-like activity. Plays a major role in the degradation of misfolded proteins. This Synechocystis sp. (strain ATCC 27184 / PCC 6803 / Kazusa) protein is Probable ATP-dependent Clp protease proteolytic subunit 3.